The chain runs to 296 residues: Ethanolamine ammonia-lyase small subunit (296 aa).

The adenosylcob(III)alamin site is built by Val-209 and Glu-230.

It belongs to the EutC family. The basic unit is a heterodimer which dimerizes to form tetramers. The heterotetramers trimerize; 6 large subunits form a core ring with 6 small subunits projecting outwards. Adenosylcob(III)alamin is required as a cofactor.

The protein localises to the bacterial microcompartment. It carries out the reaction ethanolamine = acetaldehyde + NH4(+). It participates in amine and polyamine degradation; ethanolamine degradation. Its function is as follows. Catalyzes the deamination of various vicinal amino-alcohols to oxo compounds. Allows this organism to utilize ethanolamine as the sole source of nitrogen and carbon in the presence of external vitamin B12. This chain is Ethanolamine ammonia-lyase small subunit, found in Lachnoclostridium phytofermentans (strain ATCC 700394 / DSM 18823 / ISDg) (Clostridium phytofermentans).